We begin with the raw amino-acid sequence, 73 residues long: Translational regulator CsrA (73 aa).

This sequence belongs to the CsrA/RsmA family. As to quaternary structure, homodimer; the beta-strands of each monomer intercalate to form a hydrophobic core, while the alpha-helices form wings that extend away from the core.

Its subcellular location is the cytoplasm. Functionally, a translational regulator that binds mRNA to regulate translation initiation and/or mRNA stability. Usually binds in the 5'-UTR at or near the Shine-Dalgarno sequence preventing ribosome-binding, thus repressing translation. Its main target seems to be the major flagellin gene, while its function is anatagonized by FliW. The polypeptide is Translational regulator CsrA (Thermosipho africanus (strain TCF52B)).